Consider the following 299-residue polypeptide: Oxygen-dependent coproporphyrinogen-III oxidase (299 aa).

Substrate is bound at residue serine 92. A divalent metal cation is bound by residues histidine 96 and histidine 106. The active-site Proton donor is the histidine 106. 108–110 (NVR) is a substrate binding site. Residues histidine 145 and histidine 175 each coordinate a divalent metal cation. The important for dimerization stretch occupies residues 240 to 275 (YVEFNLVWDRGTLFGLQTGGRTESILMSMPPLVRWE). Residue 258–260 (GGR) participates in substrate binding.

Belongs to the aerobic coproporphyrinogen-III oxidase family. Homodimer. Requires a divalent metal cation as cofactor.

It localises to the cytoplasm. It catalyses the reaction coproporphyrinogen III + O2 + 2 H(+) = protoporphyrinogen IX + 2 CO2 + 2 H2O. It participates in porphyrin-containing compound metabolism; protoporphyrin-IX biosynthesis; protoporphyrinogen-IX from coproporphyrinogen-III (O2 route): step 1/1. In terms of biological role, involved in the heme biosynthesis. Catalyzes the aerobic oxidative decarboxylation of propionate groups of rings A and B of coproporphyrinogen-III to yield the vinyl groups in protoporphyrinogen-IX. This Shigella flexneri protein is Oxygen-dependent coproporphyrinogen-III oxidase.